The primary structure comprises 155 residues: Molybdopterin synthase catalytic subunit (155 aa).

Residues 109-110, Lys125, and 132-134 contribute to the substrate site; these read HR and KKE.

This sequence belongs to the MoaE family. MOCS2B subfamily. As to quaternary structure, heterotetramer; composed of 2 small (MOCS2A) and 2 large (MOCS2B) subunits.

The protein localises to the cytoplasm. The protein resides in the cytosol. It catalyses the reaction 2 [molybdopterin-synthase sulfur-carrier protein]-C-terminal-Gly-aminoethanethioate + cyclic pyranopterin phosphate + H2O = molybdopterin + 2 [molybdopterin-synthase sulfur-carrier protein]-C-terminal Gly-Gly + 2 H(+). It functions in the pathway cofactor biosynthesis; molybdopterin biosynthesis. Catalytic subunit of the molybdopterin synthase complex, a complex that catalyzes the conversion of precursor Z into molybdopterin. Acts by mediating the incorporation of 2 sulfur atoms from thiocarboxylated MOCS2A into precursor Z to generate a dithiolene group. The sequence is that of Molybdopterin synthase catalytic subunit from Taeniopygia guttata (Zebra finch).